Reading from the N-terminus, the 149-residue chain is Large ribosomal subunit protein uL13 (149 aa).

The protein belongs to the universal ribosomal protein uL13 family. As to quaternary structure, part of the 50S ribosomal subunit.

Its function is as follows. This protein is one of the early assembly proteins of the 50S ribosomal subunit, although it is not seen to bind rRNA by itself. It is important during the early stages of 50S assembly. The chain is Large ribosomal subunit protein uL13 from Borrelia recurrentis (strain A1).